Here is a 670-residue protein sequence, read N- to C-terminus: PML-RARA-regulated adapter molecule 1 (670 aa).

Residues 1-561 (MAHHLPAAME…PQQLPPMDPK (561 aa)) are disordered. Residues 31 to 43 (DLPKKPPKPEFGK) show a composition bias toward basic and acidic residues. Tandem repeats lie at residues 70-81 (KPPPPEVTDLPK), 82-93 (KPPPPEVTDLPK), 94-105 (KPPPPEVTDLPK), and 106-117 (KPPPPEVTDLPK). The segment at 70–165 (KPPPPEVTDL…SLPEPGAPAR (96 aa)) is 4 X 12 AA repeats of K-P-P-[PQ]-P-[EQ]-[VAF]-T-D-L-P-K. The span at 114-129 (DLPKKPSKLELSDLSK) shows a compositional bias: basic and acidic residues. Ser340 carries the phosphoserine modification. The span at 386 to 398 (SSASESSLPAAVA) shows a compositional bias: low complexity. The span at 454–463 (PAKPPLPPGP) shows a compositional bias: pro residues. A compositionally biased stretch (acidic residues) spans 504–514 (EIYELYDDVEP). Basic and acidic residues predominate over residues 515-528 (RDDSSPSPKGRDEA). Positions 571–649 (KAEREFRKKF…PRTALLPLET (79 aa)) constitute an SH3 domain.

As to quaternary structure, interacts with SKAP2, LCP2 and DBNL. May interact with LYN. Interacts with NEK6. Post-translationally, may be phosphorylated on tyrosines. As to expression, expressed in peripheral blood leukocytes and bone marrow. Expressed in monocytes, and to a lesser extent in granulocytes and lymphocytes. Not expressed in non hematopoietic tissues except in lung.

Functionally, may be involved in myeloid differentiation. May be involved in integrin signaling in neutrophils. Binds to PtdIns(4)P. This chain is PML-RARA-regulated adapter molecule 1 (PRAM1), found in Homo sapiens (Human).